A 563-amino-acid chain; its full sequence is Arginine--tRNA ligase (563 aa).

A 'HIGH' region motif is present at residues 121-131 (PNIAKPFSIGH).

The protein belongs to the class-I aminoacyl-tRNA synthetase family. As to quaternary structure, monomer.

Its subcellular location is the cytoplasm. The enzyme catalyses tRNA(Arg) + L-arginine + ATP = L-arginyl-tRNA(Arg) + AMP + diphosphate. In Streptococcus pyogenes serotype M2 (strain MGAS10270), this protein is Arginine--tRNA ligase.